Here is a 194-residue protein sequence, read N- to C-terminus: Inosine triphosphate pyrophosphatase (194 aa).

11-16 contacts ITP; the sequence is TGNAKK. Mg(2+) is bound at residue glutamate 39. Residues lysine 51, 67-68, lysine 84, 143-146, lysine 166, and 171-172 each bind ITP; these read DT, FGWD, and HR.

The protein belongs to the HAM1 NTPase family. Homodimer. Requires Mg(2+) as cofactor. Mn(2+) serves as cofactor.

The protein localises to the cytoplasm. The enzyme catalyses ITP + H2O = IMP + diphosphate + H(+). It carries out the reaction dITP + H2O = dIMP + diphosphate + H(+). It catalyses the reaction XTP + H2O = XMP + diphosphate + H(+). Its function is as follows. Pyrophosphatase that hydrolyzes non-canonical purine nucleotides such as inosine triphosphate (ITP), deoxyinosine triphosphate (dITP) or xanthosine 5'-triphosphate (XTP) to their respective monophosphate derivatives. The enzyme does not distinguish between the deoxy- and ribose forms. Probably excludes non-canonical purines from RNA and DNA precursor pools, thus preventing their incorporation into RNA and DNA and avoiding chromosomal lesions. This Dictyostelium discoideum (Social amoeba) protein is Inosine triphosphate pyrophosphatase (itpa).